A 342-amino-acid chain; its full sequence is Polygalacturonase inhibitor 2 (342 aa).

The N-terminal stretch at 1-29 is a signal peptide; the sequence is MTQFNIPVTMSSSLSIILVILVSLSTAHS. Intrachain disulfides connect C32–C62 and C63–C72. N-linked (GlcNAc...) (complex) asparagine glycosylation is present at N64. LRR repeat units lie at residues 82–107, 108–132, 133–156, 157–180, 181–205, 206–228, 229–252, 253–275, 276–299, and 300–319; these read NNLD…LPYL, NFLY…LTQL, HYLY…IKTL, VTLD…LPNL, VGIT…SKLF, TSMT…NLNL, AFVD…DKNT, QKIH…SKNL, NGLD…LKFL, and HSLN…GGNL. A glycan (N-linked (GlcNAc...) (complex) asparagine) is linked at N141. A glycan (N-linked (GlcNAc...) asparagine) is linked at N303. Cystine bridges form between C310–C332 and C334–C341.

Belongs to the polygalacturonase-inhibiting protein family. Post-translationally, asn-303 is not glycosylated.

It is found in the secreted. The protein resides in the cell wall. It localises to the membrane. Functionally, inhibitor of fungal polygalacturonase. It is an important factor for plant resistance to phytopathogenic fungi. Inhibits all polygalacturonases (PG) tested, with the exception of PG from F.oxysporum which was only inhibited at 60%. The chain is Polygalacturonase inhibitor 2 (PGIP2) from Phaseolus vulgaris (Kidney bean).